We begin with the raw amino-acid sequence, 735 residues long: Catalase-peroxidase (735 aa).

Residues 1 to 10 show a composition bias toward polar residues; the sequence is MMDGAQTNSG. The disordered stretch occupies residues 1–20; the sequence is MMDGAQTNSGGCPVMHGGGS. A cross-link (tryptophyl-tyrosyl-methioninium (Trp-Tyr) (with M-254)) is located at residues 100–228; it reads WHSAGTYRTY…LAAVQMGLIY (129 aa). His-101 (proton acceptor) is an active-site residue. The segment at residues 228-254 is a cross-link (tryptophyl-tyrosyl-methioninium (Tyr-Met) (with W-100)); sequence YVNPQGPDGNPDPLASAFDIRDTFARM. Residue His-269 coordinates heme b.

The protein belongs to the peroxidase family. Peroxidase/catalase subfamily. As to quaternary structure, homodimer or homotetramer. Heme b serves as cofactor. Formation of the three residue Trp-Tyr-Met cross-link is important for the catalase, but not the peroxidase activity of the enzyme.

The catalysed reaction is H2O2 + AH2 = A + 2 H2O. It catalyses the reaction 2 H2O2 = O2 + 2 H2O. Its function is as follows. Bifunctional enzyme with both catalase and broad-spectrum peroxidase activity. This is Catalase-peroxidase from Jannaschia sp. (strain CCS1).